The following is a 554-amino-acid chain: U4/U6 small nuclear ribonucleoprotein PRP4-like protein (554 aa).

The segment covering 48-65 (APIPMMPHPPVARPPTFR) has biased composition (pro residues). The interval 48 to 99 (APIPMMPHPPVARPPTFRPPVSQNGGVKTSDSDSESDDEHIEISEESKQVRE) is disordered. Positions 88 to 99 (IEISEESKQVRE) are enriched in basic and acidic residues. WD repeat units follow at residues 253 to 292 (GDDR…NTIA), 296 to 335 (DHKE…LQTF), 337 to 376 (GHLD…ELLL), 379 to 418 (GHSR…SILV), 421 to 460 (GHIK…SLYI), 463 to 503 (AHAN…LVKS), and 506 to 545 (GHES…DEDE).

The protein resides in the nucleus speckle. Functionally, participates in pre-mRNA splicing. Part of the U4/U5/U6 tri-snRNP complex, one of the building blocks of the spliceosome. Essential for reproduction. In female gametophyte, is necessary for the egg cell and central cell fate determination and hence reproductive success. Involved in a mechanism that prevents accessory cells from adopting gametic cell fate. Modulates egg cell signaling center that regulates the development of all female gametophytic cells. In Arabidopsis thaliana (Mouse-ear cress), this protein is U4/U6 small nuclear ribonucleoprotein PRP4-like protein.